Consider the following 396-residue polypeptide: Elongation factor Tu-B (396 aa).

One can recognise a tr-type G domain in the interval 10–206 (KLHVNVGTIG…ALDTFIPDPT (197 aa)). Residues 19–26 (GHVDHGKT) form a G1 region. 19-26 (GHVDHGKT) lines the GTP pocket. A Mg(2+)-binding site is contributed by T26. The interval 60-64 (GITIS) is G2. The interval 81–84 (DCPG) is G3. GTP is bound by residues 81-85 (DCPGH) and 136-139 (NKAD). Positions 136 to 139 (NKAD) are G4. A G5 region spans residues 174 to 176 (SAR).

It belongs to the TRAFAC class translation factor GTPase superfamily. Classic translation factor GTPase family. EF-Tu/EF-1A subfamily. As to quaternary structure, monomer.

The protein localises to the cytoplasm. It carries out the reaction GTP + H2O = GDP + phosphate + H(+). Its function is as follows. GTP hydrolase that promotes the GTP-dependent binding of aminoacyl-tRNA to the A-site of ribosomes during protein biosynthesis. This Xanthomonas campestris pv. campestris (strain ATCC 33913 / DSM 3586 / NCPPB 528 / LMG 568 / P 25) protein is Elongation factor Tu-B.